The sequence spans 226 residues: Urease accessory protein UreF (226 aa).

This sequence belongs to the UreF family. As to quaternary structure, ureD, UreF and UreG form a complex that acts as a GTP-hydrolysis-dependent molecular chaperone, activating the urease apoprotein by helping to assemble the nickel containing metallocenter of UreC. The UreE protein probably delivers the nickel.

The protein localises to the cytoplasm. In terms of biological role, required for maturation of urease via the functional incorporation of the urease nickel metallocenter. The chain is Urease accessory protein UreF from Corynebacterium glutamicum (strain R).